Here is a 309-residue protein sequence, read N- to C-terminus: MSALSSENINGVYIPSALLLFGTFIVKKEFVPYAVAVTAILAGLKLFTGGNKPRKVLNPTEFQEFVLKEKIDVSHNVCIYRFALPRPTDILGLPIGQHISLAATIEGQPKEVVRSYTPISSDNEAGYFDLLVKAYPQGNISKYLTTLKIGDTMKVRGPKGAMVYTPNMCRHIGMIAGGTGITPMLQIIKAVIRNRPRNGGNDTTKLDLIFANVNPDDILLKEELDMLAAEDPDFNIYYVLNNPPQGWTGGVGFVTPEMIKEHLPAPASDVKILLCGPPPMISAMKKATESLGYTKARPVSKLEDQVFCF.

The chain crosses the membrane as a helical span at residues 30 to 50; sequence FVPYAVAVTAILAGLKLFTGG. The region spanning 60–165 is the FAD-binding FR-type domain; that stretch reads TEFQEFVLKE…RGPKGAMVYT (106 aa). FAD contacts are provided by residues 145–160 and 171–208; these read TTLK…GPKG and HIGM…KLDL.

It belongs to the flavoprotein pyridine nucleotide cytochrome reductase family. As to quaternary structure, monomer. Component of the 2-(3-amino-3-carboxypropyl)histidine synthase complex composed of dph1, dph2, dph3 and a NADH-dependent reductase, predominantly cbr1. FAD serves as cofactor.

Its subcellular location is the mitochondrion outer membrane. The catalysed reaction is 2 Fe(III)-[cytochrome b5] + NADH = 2 Fe(II)-[cytochrome b5] + NAD(+) + H(+). The enzyme catalyses 2 Fe(3+)-[Dph3] + NADH = 2 Fe(2+)-[Dph3] + NAD(+) + H(+). It participates in protein modification; peptidyl-diphthamide biosynthesis. Its function is as follows. NADH-dependent reductase for dph3 and cytochrome b5. Required for the first step of diphthamide biosynthesis, a post-translational modification of histidine which occurs in elongation factor 2. Dph1 and dph2 transfer a 3-amino-3-carboxypropyl (ACP) group from S-adenosyl-L-methionine (SAM) to a histidine residue, the reaction is assisted by a reduction system comprising dph3 and a NADH-dependent reductase, predominantly cbr1. By reducing dph3, also involved in the formation of the tRNA wobble base modification mcm5s 2U (5-methoxycarbonylmethyl-2-thiouridine), mediated by the elongator complex. The cytochrome b5/NADH cytochrome b5 reductase electron transfer system supports the catalytic activity of several sterol biosynthetic enzymes. In Aspergillus fumigatus (strain ATCC MYA-4609 / CBS 101355 / FGSC A1100 / Af293) (Neosartorya fumigata), this protein is NADH-cytochrome b5 reductase 1 (cbr1).